A 472-amino-acid polypeptide reads, in one-letter code: UDP-N-acetylmuramate--L-alanine ligase (472 aa).

122–128 (GSHGKTT) contacts ATP.

It belongs to the MurCDEF family.

The protein resides in the cytoplasm. The catalysed reaction is UDP-N-acetyl-alpha-D-muramate + L-alanine + ATP = UDP-N-acetyl-alpha-D-muramoyl-L-alanine + ADP + phosphate + H(+). It participates in cell wall biogenesis; peptidoglycan biosynthesis. In terms of biological role, cell wall formation. This Myxococcus xanthus (strain DK1622) protein is UDP-N-acetylmuramate--L-alanine ligase.